The chain runs to 100 residues: ATP synthase subunit c (100 aa).

A run of 2 helical transmembrane segments spans residues Ser27 to Gly47 and Phe72 to Val92.

This sequence belongs to the ATPase C chain family. In terms of assembly, F-type ATPases have 2 components, F(1) - the catalytic core - and F(0) - the membrane proton channel. F(1) has five subunits: alpha(3), beta(3), gamma(1), delta(1), epsilon(1). F(0) has three main subunits: a(1), b(2) and c(10-14). The alpha and beta chains form an alternating ring which encloses part of the gamma chain. F(1) is attached to F(0) by a central stalk formed by the gamma and epsilon chains, while a peripheral stalk is formed by the delta and b chains.

The protein resides in the cell inner membrane. In terms of biological role, f(1)F(0) ATP synthase produces ATP from ADP in the presence of a proton or sodium gradient. F-type ATPases consist of two structural domains, F(1) containing the extramembraneous catalytic core and F(0) containing the membrane proton channel, linked together by a central stalk and a peripheral stalk. During catalysis, ATP synthesis in the catalytic domain of F(1) is coupled via a rotary mechanism of the central stalk subunits to proton translocation. In Campylobacter curvus (strain 525.92), this protein is ATP synthase subunit c.